The primary structure comprises 163 residues: NF-kappa-B inhibitor-interacting Ras-like protein 2 (163 aa).

A small GTPase-like region spans residues 1–163; it reads MGKSCKVVIC…SANWNLHPDH (163 aa). Position 11–18 (11–18) interacts with GTP; it reads GQHGVGKT. Residues 35-43 carry the Effector region motif; that stretch reads MIETQEDIY. Residues 61 to 65 and 120 to 123 each bind GTP; these read DTRGL and NKSD.

The protein belongs to the small GTPase superfamily. Ras family. KappaB-Ras subfamily.

The protein resides in the cytoplasm. Atypical Ras-like protein that acts as a potent regulator of NF-kappa-B activity by preventing the degradation of NF-kappa-B inhibitor beta (NFKBIB) by most signals, explaining why NFKBIB is more resistant to degradation. The polypeptide is NF-kappa-B inhibitor-interacting Ras-like protein 2 (nkiras2) (Xenopus laevis (African clawed frog)).